The primary structure comprises 274 residues: Probable eukaryotic translation initiation factor 3 subunit J (274 aa).

Disordered stretches follow at residues 1–110 and 207–245; these read MDSW…KEAM and KEQQ…NVNS. A compositionally biased stretch (acidic residues) spans 38–47; the sequence is DEEDEDEEEN. The span at 52–73 shows a compositional bias: low complexity; it reads QNDSHSVSQKSSSSSQNDQGSN. Basic and acidic residues predominate over residues 82–110; that stretch reads IQERNFEKAIKASEAAAKEESLESSKEAM. Residues 219-234 are compositionally biased toward low complexity; sequence AAAPAAKPVSTAAPSK.

It belongs to the eIF-3 subunit J family. As to quaternary structure, component of the eukaryotic translation initiation factor 3 (eIF-3) complex. The eIF-3 complex appears to include tif32/eif3a, SPAC25G10.08/eif3b, tif33/eif3c, SPBC4C3.07/eif3f, tif35/eif3g and sum1/eif3i. This set of common subunits may also associate exclusively with either moe1/eif3d and int6/eif3e, or with SPAC821.05/eif3h and SPAC1751.03/eif3m. The eIF-3 complex may also include SPAC3A12.13c/eif3j. Interacts with sad1.

It is found in the cytoplasm. Component of the eukaryotic translation initiation factor 3 (eIF-3) complex, which is involved in protein synthesis of a specialized repertoire of mRNAs and, together with other initiation factors, stimulates binding of mRNA and methionyl-tRNAi to the 40S ribosome. The eIF-3 complex specifically targets and initiates translation of a subset of mRNAs involved in cell proliferation. The chain is Probable eukaryotic translation initiation factor 3 subunit J from Schizosaccharomyces pombe (strain 972 / ATCC 24843) (Fission yeast).